A 332-amino-acid chain; its full sequence is Multiple virulence factor regulator MvfR (332 aa).

The 58-residue stretch at 4 to 61 folds into the HTH lysR-type domain; that stretch reads HNLNHVNMFLQVIASGSISSAARILRKSHTAVSSAVSNLEIDLCVELVRRDGYKVEPT. Positions 21–40 form a DNA-binding region, H-T-H motif; the sequence is ISSAARILRKSHTAVSSAVS.

It belongs to the LysR transcriptional regulatory family. As to quaternary structure, forms homooligomers.

It is found in the cell inner membrane. The protein resides in the secreted. Its activity is regulated as follows. Both 3,4-dihydroxy-2-heptylquinoline (PQS) and its precursor 4-hydroxy-2-heptylquinoline (HHQ) function as ligands and promote MvfR DNA-binding activity leading to transcriptional activation. Functionally, transcription regulator that plays a critical role in virulence by positively regulating the expression of multiple quorum sensing (QS)-regulated virulence factors, genes involved in protein secretion, translation, response to oxidative stress and the phnAB operon. At the stationary phase, negatively autoregulates its function through cleavage and translocation to the extracellular space. In Pseudomonas aeruginosa (strain ATCC 15692 / DSM 22644 / CIP 104116 / JCM 14847 / LMG 12228 / 1C / PRS 101 / PAO1), this protein is Multiple virulence factor regulator MvfR.